We begin with the raw amino-acid sequence, 345 residues long: MRVADYSFELPDELIARYPTAERTASRLLSLDGNSGQLADLQFTDILEQVNPGDLMVFNNTRVIPARMFGTKQSGGKLEILVERMLDDKRVLAHVRCSKSPKVDSIVCLDGGYEMVMLARHDALFELSLQSDKTILEVLEEVGHMPLPPYIDRPDEDADKERYQTVYNQNPGAVAAPTAGLHFDDAILAALKAKGVNTAFVTLHVGAGTFQPVRVDNILDHKMHSEWAEVPQTVVDLIGETKARGNRVIAVGTTSVRSLESAAKASQGVLQSFSGDTDIFIYPGYQFQVVDAMVTNFHLPESTLIMLLSAFAGFDEVKNAYQHAIAQKYRFFSYGDAMFVTKKAN.

This sequence belongs to the QueA family. In terms of assembly, monomer.

Its subcellular location is the cytoplasm. It carries out the reaction 7-aminomethyl-7-carbaguanosine(34) in tRNA + S-adenosyl-L-methionine = epoxyqueuosine(34) in tRNA + adenine + L-methionine + 2 H(+). It functions in the pathway tRNA modification; tRNA-queuosine biosynthesis. In terms of biological role, transfers and isomerizes the ribose moiety from AdoMet to the 7-aminomethyl group of 7-deazaguanine (preQ1-tRNA) to give epoxyqueuosine (oQ-tRNA). In Shewanella pealeana (strain ATCC 700345 / ANG-SQ1), this protein is S-adenosylmethionine:tRNA ribosyltransferase-isomerase.